A 158-amino-acid polypeptide reads, in one-letter code: Transcriptional repressor NrdR (158 aa).

Residues M1–E20 form a disordered region. A zinc finger lies at C3–C34. Residues L49–D139 form the ATP-cone domain.

Belongs to the NrdR family. Requires Zn(2+) as cofactor.

In terms of biological role, negatively regulates transcription of bacterial ribonucleotide reductase nrd genes and operons by binding to NrdR-boxes. The polypeptide is Transcriptional repressor NrdR (Afipia carboxidovorans (strain ATCC 49405 / DSM 1227 / KCTC 32145 / OM5) (Oligotropha carboxidovorans)).